A 32-amino-acid polypeptide reads, in one-letter code: Peptide II.10.10 (32 aa).

3 disulfide bridges follow: Cys5–Cys24, Cys10–Cys29, and Cys14–Cys31.

It belongs to the short scorpion toxin superfamily. Potassium channel inhibitor family. Alpha-KTx 10 subfamily. In terms of tissue distribution, expressed by the venom gland.

The protein resides in the secreted. This Centruroides tecomanus (Scorpion) protein is Peptide II.10.10.